The chain runs to 488 residues: Cobyric acid synthase (488 aa).

Residues 255–442 (ALKIAVPVLP…LHGLFGSDAY (188 aa)) form the GATase cobBQ-type domain. The Nucleophile role is filled by Cys337. His434 is an active-site residue.

It belongs to the CobB/CobQ family. CobQ subfamily.

Its pathway is cofactor biosynthesis; adenosylcobalamin biosynthesis. Its function is as follows. Catalyzes amidations at positions B, D, E, and G on adenosylcobyrinic A,C-diamide. NH(2) groups are provided by glutamine, and one molecule of ATP is hydrogenolyzed for each amidation. In Rhizobium johnstonii (strain DSM 114642 / LMG 32736 / 3841) (Rhizobium leguminosarum bv. viciae), this protein is Cobyric acid synthase.